Here is a 115-residue protein sequence, read N- to C-terminus: NADH-ubiquinone oxidoreductase chain 3 (115 aa).

The next 3 membrane-spanning stretches (helical) occupy residues 3–23 (LFIM…LNLL), 55–75 (FFMV…LLPL), and 87–107 (TITW…YEWL).

The protein belongs to the complex I subunit 3 family.

The protein localises to the mitochondrion membrane. It carries out the reaction a ubiquinone + NADH + 5 H(+)(in) = a ubiquinol + NAD(+) + 4 H(+)(out). Functionally, core subunit of the mitochondrial membrane respiratory chain NADH dehydrogenase (Complex I) that is believed to belong to the minimal assembly required for catalysis. Complex I functions in the transfer of electrons from NADH to the respiratory chain. The immediate electron acceptor for the enzyme is believed to be ubiquinone. This is NADH-ubiquinone oxidoreductase chain 3 (MT-ND3) from Alligator mississippiensis (American alligator).